A 197-amino-acid polypeptide reads, in one-letter code: 3-isopropylmalate dehydratase small subunit (197 aa).

Belongs to the LeuD family. LeuD type 1 subfamily. Heterodimer of LeuC and LeuD.

The enzyme catalyses (2R,3S)-3-isopropylmalate = (2S)-2-isopropylmalate. Its pathway is amino-acid biosynthesis; L-leucine biosynthesis; L-leucine from 3-methyl-2-oxobutanoate: step 2/4. In terms of biological role, catalyzes the isomerization between 2-isopropylmalate and 3-isopropylmalate, via the formation of 2-isopropylmaleate. This chain is 3-isopropylmalate dehydratase small subunit, found in Mycobacterium sp. (strain KMS).